The following is a 660-amino-acid chain: DNA ligase (660 aa).

Residues 33-37 (DFVYD), 82-83 (SL), and E110 contribute to the NAD(+) site. K112 acts as the N6-AMP-lysine intermediate in catalysis. 4 residues coordinate NAD(+): R133, E167, K281, and K305. C396, C399, C412, and C417 together coordinate Zn(2+). The region spanning 583–660 (DENKLLVGKK…SFEDIKSYLD (78 aa)) is the BRCT domain.

It belongs to the NAD-dependent DNA ligase family. LigA subfamily. Mg(2+) serves as cofactor. Requires Mn(2+) as cofactor.

It catalyses the reaction NAD(+) + (deoxyribonucleotide)n-3'-hydroxyl + 5'-phospho-(deoxyribonucleotide)m = (deoxyribonucleotide)n+m + AMP + beta-nicotinamide D-nucleotide.. Its function is as follows. DNA ligase that catalyzes the formation of phosphodiester linkages between 5'-phosphoryl and 3'-hydroxyl groups in double-stranded DNA using NAD as a coenzyme and as the energy source for the reaction. It is essential for DNA replication and repair of damaged DNA. The sequence is that of DNA ligase from Borreliella afzelii (strain PKo) (Borrelia afzelii).